Consider the following 457-residue polypeptide: Putative metabolite transport protein YwtG (457 aa).

12 helical membrane-spanning segments follow: residues 7–27, 38–58, 75–95, 97–117, 136–156, 163–183, 240–260, 276–296, 309–329, 340–360, 377–397, and 400–420; these read IWLY…TGVI, LGLN…GAIL, AIMA…LAPN, GVMV…TTIV, LNQL…YIFA, WMLG…LFMP, ALIA…NTII, ASIL…LVAI, LFGN…NLFF, VICL…VVWV, VSTL…PILM, and IGIS…FLFV. Residues 438–457 form a disordered region; that stretch reads DLRDKNGQGGAAGKQQTVGT.

It belongs to the major facilitator superfamily. Sugar transporter (TC 2.A.1.1) family.

The protein resides in the cell membrane. The chain is Putative metabolite transport protein YwtG (ywtG) from Bacillus subtilis (strain 168).